A 255-amino-acid polypeptide reads, in one-letter code: Ribosome maturation factor RimP (255 aa).

The segment at 177–255 (LRRGSAPPQD…ARLKNRDTLH (79 aa)) is disordered. A compositionally biased stretch (acidic residues) spans 186-202 (DGEDVDEEAGEAPEDEV). Over residues 216–230 (PKMDKKSDKKSDKPV) the composition is skewed to basic and acidic residues.

This sequence belongs to the RimP family.

Its subcellular location is the cytoplasm. In terms of biological role, required for maturation of 30S ribosomal subunits. This Methylorubrum populi (strain ATCC BAA-705 / NCIMB 13946 / BJ001) (Methylobacterium populi) protein is Ribosome maturation factor RimP.